A 182-amino-acid polypeptide reads, in one-letter code: Ribulose bisphosphate carboxylase small subunit, chloroplastic 1 (182 aa).

Residues 1–42 (MASIMMNKSVVLSKECAKPLATPKVTLNKRGFATTIATKNRE) constitute a chloroplast transit peptide.

Belongs to the RuBisCO small chain family. In terms of assembly, heterohexadecamer of 8 large and 8 small subunits.

It is found in the plastid. Its subcellular location is the chloroplast. Functionally, ruBisCO catalyzes two reactions: the carboxylation of D-ribulose 1,5-bisphosphate, the primary event in carbon dioxide fixation, as well as the oxidative fragmentation of the pentose substrate. Both reactions occur simultaneously and in competition at the same active site. Although the small subunit is not catalytic it is essential for maximal activity. The polypeptide is Ribulose bisphosphate carboxylase small subunit, chloroplastic 1 (Acetabularia acetabulum (Mermaid's wine glass)).